A 312-amino-acid polypeptide reads, in one-letter code: Zinc finger CCCH domain-containing protein 25 (312 aa).

Residues 36–114 (AYVFVGGIPY…RIVRVDHVSK (79 aa)) form the RRM domain. Residues 130–157 (REARGVCYAFQKGECNRGASCRYSHDEQ) form a C3H1-type zinc finger. The segment at 153-312 (SHDEQRNANT…DSERYRKSRR (160 aa)) is disordered. 3 stretches are compositionally biased toward basic and acidic residues: residues 166 to 184 (SKEESKARWEHDRHHEPPM), 197 to 210 (RFPDRAKEENKSTG), and 219 to 312 (EAYK…KSRR).

This Oryza sativa subsp. japonica (Rice) protein is Zinc finger CCCH domain-containing protein 25.